The chain runs to 800 residues: Integrin beta-5 (800 aa).

A signal peptide spans Met-1–Gly-24. The Extracellular portion of the chain corresponds to Leu-25–Met-722. One can recognise a PSI domain in the interval Ile-27 to Gly-76. 19 disulfide bridges follow: Cys-28/Cys-46, Cys-36/Cys-463, Cys-39/Cys-64, Cys-49/Cys-75, Cys-202/Cys-211, Cys-259/Cys-300, Cys-401/Cys-413, Cys-433/Cys-461, Cys-465/Cys-484, Cys-476/Cys-487, Cys-489/Cys-498, Cys-500/Cys-530, Cys-513/Cys-528, Cys-522/Cys-533, Cys-535/Cys-548, Cys-550/Cys-571, Cys-555/Cys-569, Cys-563/Cys-574, and Cys-576/Cys-585. One can recognise a VWFA domain in the interval Tyr-136 to Ile-378. Mg(2+)-binding residues include Ser-147 and Ser-149. Ca(2+) contacts are provided by Ser-149, Asp-152, Asp-153, and Asp-184. 4 residues coordinate Ca(2+): Asn-242, Asp-244, Pro-246, and Glu-247. Glu-247 provides a ligand contact to Mg(2+). The N-linked (GlcNAc...) asparagine glycan is linked to Asn-347. Residue Gly-362 coordinates Ca(2+). 4 I-EGF domains span residues Cys-465–Glu-499, Cys-500–Glu-549, Cys-550–Asn-586, and Cys-587–Glu-626. The N-linked (GlcNAc...) asparagine glycan is linked to Asn-479. Asn-552 carries an N-linked (GlcNAc...) asparagine glycan. N-linked (GlcNAc...) asparagine glycosylation is present at Asn-586. Cystine bridges form between Cys-587–Cys-610, Cys-594–Cys-608, Cys-602–Cys-613, Cys-615–Cys-625, Cys-628–Cys-631, Cys-635–Cys-683, Cys-641–Cys-662, Cys-644–Cys-658, and Cys-691–Cys-715. N-linked (GlcNAc...) asparagine glycans are attached at residues Asn-655 and Asn-706. A helical membrane pass occupies residues Thr-723–Trp-743. Topologically, residues Lys-744–Asp-800 are cytoplasmic. Position 771 is a phosphoserine (Ser-771).

Belongs to the integrin beta chain family. Heterodimer of an alpha and a beta subunit. Beta-5 (ITGB5) associates with alpha-V (ITGAV). Interacts with MYO10. Interacts with DAB2. Integrin ITGAV:ITGB5 interacts with FBLN5 (via N-terminus). ITGAV:ITGB5 interacts with CCN3. Interacts with tensin TNS3; TNS3 also interacts with PEAK1, thus acting as an adapter molecule to bridge the association of PEAK1 with ITGB5.

The protein resides in the cell membrane. Its function is as follows. Integrin alpha-V/beta-5 (ITGAV:ITGB5) is a receptor for fibronectin. It recognizes the sequence R-G-D in its ligand. The polypeptide is Integrin beta-5 (ITGB5) (Bos taurus (Bovine)).